We begin with the raw amino-acid sequence, 815 residues long: Phenylalanine--tRNA ligase beta subunit (815 aa).

One can recognise a tRNA-binding domain in the interval 40-155 (APPFDKIVVA…EDAPVGQNIR (116 aa)). Residues 406-485 (PQRRPVSLRL…RIYGFERIAA (80 aa)) form the B5 domain. Residues aspartate 463, aspartate 469, glutamate 472, and glutamate 473 each contribute to the Mg(2+) site. The region spanning 712–814 (SKFPAAVRDL…LGEAFQARLR (103 aa)) is the FDX-ACB domain.

The protein belongs to the phenylalanyl-tRNA synthetase beta subunit family. Type 1 subfamily. Tetramer of two alpha and two beta subunits. Requires Mg(2+) as cofactor.

It localises to the cytoplasm. It catalyses the reaction tRNA(Phe) + L-phenylalanine + ATP = L-phenylalanyl-tRNA(Phe) + AMP + diphosphate + H(+). The protein is Phenylalanine--tRNA ligase beta subunit of Cupriavidus pinatubonensis (strain JMP 134 / LMG 1197) (Cupriavidus necator (strain JMP 134)).